A 217-amino-acid chain; its full sequence is MQIENRLNAAAASGDGLGNLAGRSADPTGAADKGESGVPVPPTGFVDPTPRISLSADALLYLGRAKRTPEKLPPLTKDEWNNRLSPQLAAREHQAFGRLAETGDYRAYYRAFIDYYDGLRPEDQNSLRYFGTREAAVAGLRSLDYDADSGLDMDAEFENLVSVFLEEDKIAPSPATTTMSPAERAFFAWDASNISYEVDAPEPRPMTEIERLYSELL.

The tract at residues G14–T49 is disordered.

May be part of a system that R.meliloti uses to respond to plant (alfalfa) biotin signals. The protein is Biotin transport regulator (bioS) of Rhizobium meliloti (strain 1021) (Ensifer meliloti).